Consider the following 1342-residue polypeptide: Zinc finger protein 335 (1342 aa).

Disordered stretches follow at residues 1-102 (MEEN…VTGG) and 201-228 (TSTS…AEEP). Residues 34-49 (AVSADSSDAAAAPGQA) show a composition bias toward low complexity. The span at 201-217 (TSTSTCLEAQGGPSSPV) shows a compositional bias: polar residues. The segment at 245-268 (FKCKMCQYRSSTKATLLRHMRERH) adopts a C2H2-type 1 zinc-finger fold. The segment at 274–442 (AAAAAAGKKG…TLPRRRGRPS (169 aa)) is disordered. Positions 297 to 327 (EEGPEEEDDDDIVDAGAIDDLEEDSDYNPAE) are enriched in acidic residues. Positions 346-357 (RPRRRPGRPRKL) are enriched in basic residues. 8 C2H2-type zinc fingers span residues 465–487 (FLCR…VNSH), 495–517 (FKCL…MFNH), 523–545 (YKCD…AAVH), 562–584 (FPCP…MKTH), 590–612 (HMCD…LLTH), 621–643 (FKCE…QLSH), 649–672 (FKCS…AVKH), and 678–701 (FACE…RCRH). 2 disordered regions span residues 732–763 (LKQQ…QSSE) and 964–1013 (CGGL…SAAT). The span at 740-753 (PGPPPSSPGPPEIP) shows a compositional bias: pro residues. Ser-976, Ser-992, and Ser-1007 each carry phosphoserine. The span at 986-997 (SQSSASSPPATS) shows a compositional bias: low complexity. 4 C2H2-type zinc fingers span residues 1019–1041 (FSCK…KRAH), 1047–1069 (FKCP…MAQH), 1075–1097 (HQCS…MLTH), and 1103–1126 (FACH…QRLH). Lys-1022 is covalently cross-linked (Glycyl lysine isopeptide (Lys-Gly) (interchain with G-Cter in SUMO2)). The interval 1041–1342 (HAGPGAFKCP…EYDVITLADD (302 aa)) is involved in the interaction with CCAR2. The residue at position 1153 (Ser-1153) is a Phosphoserine.

This sequence belongs to the krueppel C2H2-type zinc-finger protein family. As to quaternary structure, interacts with NCOA6; may enhance ligand-dependent transcriptional activation by nuclear hormone receptors. Interacts with CNOT6. Interacts with CNOT9; the interaction is direct. Component of a nuclear receptor-mediated transcription complex composed of at least ZNF335, CCAR2 and EMSY; the complex stimulates the transcription of nuclear receptor target genes such as SOX9 and HOXA1. Within the complex interacts with EMSY and interacts (via C-terminus) with CCAR2. Interacts with members of histone H3'Lys4'(H3K4) methyltransferase complexes ASH2L, CXXC1, KMT2A/MLL1, RBBP5, SETD1A and WDR5. Component of a histone methylation complex composed of at least ZNF335, RBBP5, ASH2L and WDR5; the complex may have histone H3-specific methyltransferase activity, however does not have specificity for 'Lys-4' of histone H3. Interacts with RBBP5 and WDR5. Interacts with ASHL2. Components of this complex may associate with components of the ZNF335-CCAR2-EMSY nuclear receptor-mediated transcription complex to form a complex at least composed of ZNF335, HCFC1, CCAR2, EMSY, MKI67, RBBP5, ASH2L and WDR5. Within this complex also interacts with HCFC1 and MKI67. As to expression, ubiquitously expressed.

Its subcellular location is the nucleus. Its function is as follows. Component or associated component of some histone methyltransferase complexes may regulate transcription through recruitment of those complexes on gene promoters. Enhances ligand-dependent transcriptional activation by nuclear hormone receptors. Plays an important role in neural progenitor cell proliferation and self-renewal through the regulation of specific genes involved brain development, including REST. Also controls the expression of genes involved in somatic development and regulates, for instance, lymphoblast proliferation. In Homo sapiens (Human), this protein is Zinc finger protein 335 (ZNF335).